Consider the following 264-residue polypeptide: S-adenosylmethionine decarboxylase proenzyme (264 aa).

Serine 112 functions as the Schiff-base intermediate with substrate; via pyruvic acid in the catalytic mechanism. Serine 112 bears the Pyruvic acid (Ser); by autocatalysis mark. Catalysis depends on histidine 117, which acts as the Proton acceptor; for processing activity. Cysteine 140 acts as the Proton donor; for catalytic activity in catalysis.

It belongs to the prokaryotic AdoMetDC family. Type 2 subfamily. Heterooctamer of four alpha and four beta chains arranged as a tetramer of alpha/beta heterodimers. Pyruvate serves as cofactor. In terms of processing, is synthesized initially as an inactive proenzyme. Formation of the active enzyme involves a self-maturation process in which the active site pyruvoyl group is generated from an internal serine residue via an autocatalytic post-translational modification. Two non-identical subunits are generated from the proenzyme in this reaction, and the pyruvate is formed at the N-terminus of the alpha chain, which is derived from the carboxyl end of the proenzyme. The post-translation cleavage follows an unusual pathway, termed non-hydrolytic serinolysis, in which the side chain hydroxyl group of the serine supplies its oxygen atom to form the C-terminus of the beta chain, while the remainder of the serine residue undergoes an oxidative deamination to produce ammonia and the pyruvoyl group blocking the N-terminus of the alpha chain.

It catalyses the reaction S-adenosyl-L-methionine + H(+) = S-adenosyl 3-(methylsulfanyl)propylamine + CO2. It participates in amine and polyamine biosynthesis; S-adenosylmethioninamine biosynthesis; S-adenosylmethioninamine from S-adenosyl-L-methionine: step 1/1. Functionally, catalyzes the decarboxylation of S-adenosylmethionine to S-adenosylmethioninamine (dcAdoMet), the propylamine donor required for the synthesis of the polyamines spermine and spermidine from the diamine putrescine. The polypeptide is S-adenosylmethionine decarboxylase proenzyme (Salmonella typhi).